The sequence spans 160 residues: Cytochrome b6-f complex subunit 4 (160 aa).

3 helical membrane passes run 36 to 56, 95 to 115, and 131 to 151; these read LLYIFPVVILGTIACNVGLAV, LLGVLLMVSVPAGLLTVPFLE, and TVFLIGTAVALWLGIGATLPI.

Belongs to the cytochrome b family. PetD subfamily. The 4 large subunits of the cytochrome b6-f complex are cytochrome b6, subunit IV (17 kDa polypeptide, petD), cytochrome f and the Rieske protein, while the 4 small subunits are petG, petL, petM and petN. The complex functions as a dimer.

Its subcellular location is the plastid. The protein localises to the chloroplast thylakoid membrane. Its function is as follows. Component of the cytochrome b6-f complex, which mediates electron transfer between photosystem II (PSII) and photosystem I (PSI), cyclic electron flow around PSI, and state transitions. The chain is Cytochrome b6-f complex subunit 4 from Morus indica (Mulberry).